Consider the following 445-residue polypeptide: Argininosuccinate synthase (445 aa).

ATP-binding positions include 17–25 (AFSGGLDTS) and alanine 43. Tyrosine 99 serves as a coordination point for L-citrulline. Residues glycine 129 and threonine 131 each coordinate ATP. Residues threonine 131, asparagine 135, and aspartate 136 each coordinate L-aspartate. Asparagine 135 contributes to the L-citrulline binding site. Aspartate 136 is a binding site for ATP. Positions 139 and 192 each coordinate L-citrulline. Aspartate 194 provides a ligand contact to ATP. L-citrulline is bound by residues threonine 201, glutamate 203, and glutamate 280.

The protein belongs to the argininosuccinate synthase family. Type 2 subfamily. As to quaternary structure, homotetramer.

The protein localises to the cytoplasm. The catalysed reaction is L-citrulline + L-aspartate + ATP = 2-(N(omega)-L-arginino)succinate + AMP + diphosphate + H(+). It participates in amino-acid biosynthesis; L-arginine biosynthesis; L-arginine from L-ornithine and carbamoyl phosphate: step 2/3. The sequence is that of Argininosuccinate synthase (argG) from Bradyrhizobium diazoefficiens (strain JCM 10833 / BCRC 13528 / IAM 13628 / NBRC 14792 / USDA 110).